A 171-amino-acid chain; its full sequence is Myelin basic protein (171 aa).

An N-acetylalanine modification is found at Ala1. Residues 1 to 12 (ASQKRPSQRHGS) are compositionally biased toward basic residues. The disordered stretch occupies residues 1–171 (ASQKRPSQRH…SRSGSPMARR (171 aa)). 2 positions are modified to phosphoserine: Ser7 and Ser12. The residue at position 14 (Tyr14) is a Phosphotyrosine. Ser19 carries the phosphoserine modification. Thr20 bears the Phosphothreonine mark. Residues Arg25 and Arg31 each carry the citrulline modification. The residue at position 35 (Thr35) is a Phosphothreonine. Ser39 carries the phosphoserine modification. Arg42 and Arg48 each carry omega-N-methylarginine. Phosphoserine is present on Ser55. Thr66 carries the phosphothreonine modification. Tyr68 carries the post-translational modification Phosphotyrosine. Thr95 and Thr98 each carry phosphothreonine. Gln103 carries the post-translational modification Deamidated glutamine. Arg107 bears the Omega-N-methylarginine; alternate mark. Symmetric dimethylarginine; alternate is present on Arg107. At Ser115 the chain carries Phosphoserine. Lys122 carries the post-translational modification N6-acetyllysine. Arg130 bears the Citrulline mark. Position 148 is a deamidated glutamine (Gln148). Arg160 bears the Citrulline mark. At Ser162 the chain carries Phosphoserine. A Phosphoserine; by UHMK1 modification is found at Ser166. Arg171 bears the Citrulline mark.

This sequence belongs to the myelin basic protein family. Homodimer. Post-translationally, as in other animals, several charge isomers may be produced as a result of optional post-translational modifications, such as phosphorylation of serine or threonine residues, deamidation of glutamine or asparagine residues, citrullination and methylation of arginine residues. Phosphorylated by TAOK2, VRK2, MAPK11, MAPK12, MAPK14 and MINK1. In terms of processing, proteolytically cleaved in B cell lysosomes by cathepsin CTSG which degrades the major immunogenic MBP epitope and prevents the activation of MBP-specific autoreactive T cells.

It is found in the myelin membrane. Functionally, is, with PLP, the most abundant protein component of the myelin membrane in the CNS. Has a role in both the formation and stabilization of this compact multilayer arrangement of bilayers. Each splice variant and charge isomer may have a specialized function in the assembly of an optimized, biochemically functional myelin membrane. In Sus scrofa (Pig), this protein is Myelin basic protein (MBP).